Reading from the N-terminus, the 518-residue chain is Ent-cassadiene hydroxylase (518 aa).

A helical transmembrane segment spans residues 6-26 (LILALGLSVLFVLLSKLVSSA). Residue Cys451 coordinates heme.

Belongs to the cytochrome P450 family. The cofactor is heme.

The protein localises to the membrane. It carries out the reaction ent-cassa-12,15-diene + 3 reduced [NADPH--hemoprotein reductase] + 3 O2 = ent-3beta-hydroxycassa-12,15-dien-2-one + 3 oxidized [NADPH--hemoprotein reductase] + 4 H2O + 3 H(+). Functionally, enzyme of the diterpenoid metabolism involved in the biosynthesis of antibacterial oryzalides such as phytocassane. Catalyzes the hydroxylation of ent-cassa-12,15-diene to form ent-3beta-hydroxycassa-12,15-dien-2-one. The protein is Ent-cassadiene hydroxylase (CYP71Z7) of Oryza sativa subsp. japonica (Rice).